The following is a 309-amino-acid chain: MTGNGADAMKKSRSIRKDNLAGYAFISPFIIGFLCFTVIPMGASLFLSFTSYDLFTAPKWIGLDNFKEMFTGDEKYWQSLKVTFTYVLAGVPLRLGFALFIAVILNNAAKGTAIYRTLFYLPSIIGGSVAVAIMWRNIFGNDGVINALLFFVGIDQKILWYQNPTSALWTLILLSVWQFGSSMLIFLAGLKNIPSSYLEAASVDGANRVQRFFKITLPILTPIIFFNLVMQTISAFMTFTPAYIISKGEGGPLDGTLLYSLYLFQRAFNYFQMGYASAMAWVMLVIVGLITLILFKTSSYWVHYESKEE.

The next 6 membrane-spanning stretches (helical) occupy residues 29–49 (FIIGFLCFTVIPMGASLFLSF), 84–104 (FTYVLAGVPLRLGFALFIAVI), 114–134 (IYRTLFYLPSIIGGSVAVAIM), 167–187 (ALWTLILLSVWQFGSSMLIFL), 217–237 (LPILTPIIFFNLVMQTISAFM), and 275–295 (YASAMAWVMLVIVGLITLILF). Residues 80–294 (LKVTFTYVLA…VIVGLITLIL (215 aa)) form the ABC transmembrane type-1 domain.

It belongs to the binding-protein-dependent transport system permease family. MalFG subfamily.

The protein resides in the cell membrane. Its function is as follows. Part of a binding-protein-dependent transport system. Probably responsible for the translocation of the substrate across the membrane. In Bacillus subtilis (strain 168), this protein is Probable ABC transporter permease protein YesP (yesP).